A 503-amino-acid polypeptide reads, in one-letter code: ATP synthase subunit alpha (503 aa).

An ATP-binding site is contributed by 170–177; sequence GDRATGKT.

Belongs to the ATPase alpha/beta chains family. As to quaternary structure, F-type ATPases have 2 components, CF(1) - the catalytic core - and CF(0) - the membrane proton channel. CF(1) has five subunits: alpha(3), beta(3), gamma(1), delta(1), epsilon(1). CF(0) has three main subunits: a(1), b(2) and c(9-12). The alpha and beta chains form an alternating ring which encloses part of the gamma chain. CF(1) is attached to CF(0) by a central stalk formed by the gamma and epsilon chains, while a peripheral stalk is formed by the delta and b chains.

Its subcellular location is the cell inner membrane. The enzyme catalyses ATP + H2O + 4 H(+)(in) = ADP + phosphate + 5 H(+)(out). Functionally, produces ATP from ADP in the presence of a proton gradient across the membrane. The alpha chain is a regulatory subunit. The polypeptide is ATP synthase subunit alpha (Aquifex aeolicus (strain VF5)).